The following is a 341-amino-acid chain: L-threonine 3-dehydrogenase (341 aa).

Residue C38 coordinates Zn(2+). Catalysis depends on charge relay system residues T40 and H43. Zn(2+) is bound by residues H63, E64, C93, C96, C99, and C107. NAD(+)-binding positions include I175, D195, R200, 262 to 264, and 286 to 287; these read LGI and IY.

The protein belongs to the zinc-containing alcohol dehydrogenase family. As to quaternary structure, homotetramer. Zn(2+) is required as a cofactor.

Its subcellular location is the cytoplasm. It catalyses the reaction L-threonine + NAD(+) = (2S)-2-amino-3-oxobutanoate + NADH + H(+). Its pathway is amino-acid degradation; L-threonine degradation via oxydo-reductase pathway; glycine from L-threonine: step 1/2. In terms of biological role, catalyzes the NAD(+)-dependent oxidation of L-threonine to 2-amino-3-ketobutyrate. The polypeptide is L-threonine 3-dehydrogenase (Proteus mirabilis (strain HI4320)).